The sequence spans 791 residues: Disintegrin and metalloproteinase domain-containing protein 1a (791 aa).

Residues 1–65 (MSVAAAGRGF…LLIFLPSTFC (65 aa)) form the signal peptide. An N-linked (GlcNAc...) asparagine glycan is attached at Asn-72. The interval 201–220 (CSVTPKDSPGDTSHPPRSRK) is disordered. Residues 235–429 (KYVEMFVVVN…HRGACLLDEP (195 aa)) form the Peptidase M12B domain. Asn-256 carries N-linked (GlcNAc...) asparagine glycosylation. Disulfide bonds link Cys-345–Cys-424, Cys-385–Cys-408, and Cys-387–Cys-393. Position 370 (His-370) interacts with Zn(2+). Glu-371 is an active-site residue. Residues His-374 and His-380 each contribute to the Zn(2+) site. N-linked (GlcNAc...) asparagine glycosylation is found at Asn-407 and Asn-484. Residues 438–522 (AANCGNGVVE…ECPANSYMQD (85 aa)) form the Disintegrin domain. Cys-494 and Cys-514 are joined by a disulfide. Asn-630 is a glycosylation site (N-linked (GlcNAc...) asparagine). In terms of domain architecture, EGF-like spans 663–697 (LQYNCEPQEMCHGNGVCNNFKHCHCDAGFAPPDCS). 3 disulfide bridges follow: Cys-667–Cys-679, Cys-673–Cys-685, and Cys-687–Cys-696. A helical membrane pass occupies residues 741 to 761 (VMVLVVPIFLVVLLCCLMLIA). The Cytoplasmic portion of the chain corresponds to 762–791 (YLWSEVQEVVSPPSSSESSSSSSWSDSDSQ). The disordered stretch occupies residues 772-791 (SPPSSSESSSSSSWSDSDSQ).

In terms of assembly, heterodimer with ADAM2/fertilin subunit beta. In terms of tissue distribution, testis.

The protein resides in the membrane. Functionally, may be involved in sperm-egg fusion. The protein is Disintegrin and metalloproteinase domain-containing protein 1a (Adam1a) of Mus musculus (Mouse).